The following is a 262-amino-acid chain: Type III pantothenate kinase (262 aa).

Residue 6 to 13 coordinates ATP; the sequence is DAGNTNMV. Residues Tyr-100 and 107–110 contribute to the substrate site; that span reads GADR. The Proton acceptor role is filled by Asp-109. K(+) is bound at residue Asp-129. Thr-132 contributes to the ATP binding site. Residue Thr-184 participates in substrate binding.

It belongs to the type III pantothenate kinase family. In terms of assembly, homodimer. The cofactor is NH4(+). K(+) serves as cofactor.

Its subcellular location is the cytoplasm. It catalyses the reaction (R)-pantothenate + ATP = (R)-4'-phosphopantothenate + ADP + H(+). It participates in cofactor biosynthesis; coenzyme A biosynthesis; CoA from (R)-pantothenate: step 1/5. Its function is as follows. Catalyzes the phosphorylation of pantothenate (Pan), the first step in CoA biosynthesis. This is Type III pantothenate kinase from Clostridium tetani (strain Massachusetts / E88).